Consider the following 216-residue polypeptide: Imidazole glycerol phosphate synthase subunit HisH (216 aa).

Residues 2–216 enclose the Glutamine amidotransferase type-1 domain; sequence RVAIIDYGSG…LISNFLRWKP (215 aa). The active-site Nucleophile is the Cys88. Catalysis depends on residues His196 and Glu198.

In terms of assembly, heterodimer of HisH and HisF.

It is found in the cytoplasm. It carries out the reaction 5-[(5-phospho-1-deoxy-D-ribulos-1-ylimino)methylamino]-1-(5-phospho-beta-D-ribosyl)imidazole-4-carboxamide + L-glutamine = D-erythro-1-(imidazol-4-yl)glycerol 3-phosphate + 5-amino-1-(5-phospho-beta-D-ribosyl)imidazole-4-carboxamide + L-glutamate + H(+). The catalysed reaction is L-glutamine + H2O = L-glutamate + NH4(+). It participates in amino-acid biosynthesis; L-histidine biosynthesis; L-histidine from 5-phospho-alpha-D-ribose 1-diphosphate: step 5/9. In terms of biological role, IGPS catalyzes the conversion of PRFAR and glutamine to IGP, AICAR and glutamate. The HisH subunit catalyzes the hydrolysis of glutamine to glutamate and ammonia as part of the synthesis of IGP and AICAR. The resulting ammonia molecule is channeled to the active site of HisF. The chain is Imidazole glycerol phosphate synthase subunit HisH from Rhizobium meliloti (strain 1021) (Ensifer meliloti).